The chain runs to 879 residues: Phosphoenolpyruvate carboxylase (879 aa).

Catalysis depends on residues histidine 138 and lysine 545.

It belongs to the PEPCase type 1 family. Requires Mg(2+) as cofactor.

It catalyses the reaction oxaloacetate + phosphate = phosphoenolpyruvate + hydrogencarbonate. Forms oxaloacetate, a four-carbon dicarboxylic acid source for the tricarboxylic acid cycle. This Actinobacillus pleuropneumoniae serotype 5b (strain L20) protein is Phosphoenolpyruvate carboxylase.